Here is a 328-residue protein sequence, read N- to C-terminus: dTDP-3,4-didehydro-2,6-dideoxy-alpha-D-glucose 3-reductase (328 aa).

Arg20 lines the substrate pocket. Residues 38 to 39 (SR), Leu75, and His80 each bind NADP(+). The active-site Proton donor is the Lys98. The NADP(+) site is built by Arg166 and Asp178. Tyr236 and Thr256 together coordinate substrate.

It belongs to the Gfo/Idh/MocA family.

The enzyme catalyses dTDP-4-dehydro-2,6-dideoxy-alpha-D-glucose + NADP(+) = dTDP-3,4-didehydro-2,6-dideoxy-alpha-D-glucose + NADPH + H(+). Its pathway is antibiotic biosynthesis. Its function is as follows. Involved in the biosynthesis of one of the two 2,6-deoxysugars, dTDP-L-oleandrose, attached to the macrolactone ring oleandolide to produce the aglycone antibiotic oleandomycin. Catalyzes the reduction of the C-3 keto moiety of dTDP-3,4-diketo-2,6-dideoxy-alpha-D-glucose to yield dTDP-4-keto-2,6-dideoxy-alpha-D-glucose. NADPH is the better reductant, however NADH can also be used. The chain is dTDP-3,4-didehydro-2,6-dideoxy-alpha-D-glucose 3-reductase from Streptomyces antibioticus.